The sequence spans 254 residues: Proteasome subunit alpha (254 aa).

Residues 232–254 (PEVDSSESSNEAEAGAEKGSGES) form a disordered region.

This sequence belongs to the peptidase T1A family. The 20S proteasome core is composed of 14 alpha and 14 beta subunits that assemble into four stacked heptameric rings, resulting in a barrel-shaped structure. The two inner rings, each composed of seven catalytic beta subunits, are sandwiched by two outer rings, each composed of seven alpha subunits. The catalytic chamber with the active sites is on the inside of the barrel. Has a gated structure, the ends of the cylinder being occluded by the N-termini of the alpha-subunits. Is capped by the proteasome-associated ATPase, ARC.

Its subcellular location is the cytoplasm. The protein operates within protein degradation; proteasomal Pup-dependent pathway. Its activity is regulated as follows. The formation of the proteasomal ATPase ARC-20S proteasome complex, likely via the docking of the C-termini of ARC into the intersubunit pockets in the alpha-rings, may trigger opening of the gate for substrate entry. Interconversion between the open-gate and close-gate conformations leads to a dynamic regulation of the 20S proteasome proteolysis activity. In terms of biological role, component of the proteasome core, a large protease complex with broad specificity involved in protein degradation. This Mycolicibacterium vanbaalenii (strain DSM 7251 / JCM 13017 / BCRC 16820 / KCTC 9966 / NRRL B-24157 / PYR-1) (Mycobacterium vanbaalenii) protein is Proteasome subunit alpha.